We begin with the raw amino-acid sequence, 523 residues long: Major facilitator-type transporter psiT2 (523 aa).

Positions 1–26 (MSLERSTSPNPTERTSLLSDTASTIS) are enriched in polar residues. Positions 1–45 (MSLERSTSPNPTERTSLLSDTASTISSRDDVEQSSLKQRRTPIPT) are disordered. 5 helical membrane passes run 88–108 (FYSG…IFML), 125–145 (ALGI…TMML), 149–169 (VCAG…SELT), 175–195 (ALVV…GPLI), and 221–241 (FLPS…GYFF). A glycan (N-linked (GlcNAc...) asparagine) is linked at Asn269. Helical transmembrane passes span 317 to 337 (FLMF…FTAV), 352 to 372 (AFSV…PWVL), and 382 to 402 (HFCM…NPLA). An N-linked (GlcNAc...) asparagine glycan is attached at Asn410. 3 helical membrane passes run 419–439 (GLLY…VMAF), 455–474 (LATA…AFCP), and 488–508 (NILG…VGVW).

Belongs to the major facilitator superfamily. TCR/Tet family.

The protein localises to the membrane. Major facilitator-type transporter; part of the gene cluster that mediates the biosynthesis of psilocybin, a psychotropic tryptamine-derived natural product. The protein is Major facilitator-type transporter psiT2 of Psilocybe cubensis (Psychedelic mushroom).